Consider the following 337-residue polypeptide: ATP-dependent (S)-NAD(P)H-hydrate dehydratase (337 aa).

Position 6 is a phosphoserine (serine 6). One can recognise a YjeF C-terminal domain in the interval 11–335; sequence IKLAQKRCIP…DRVGEVFAKL (325 aa). (6S)-NADPHX contacts are provided by residues glycine 121 and 182–188; that span reads NVVEFKR. ATP-binding positions include 218–222 and 240–249; these read KGQSD and GSNKRVGGQG. Residues 224–246 are disordered; the sequence is IFSPDSEKDMLTNSEEGSNKRVG. (6S)-NADPHX is bound at residue aspartate 250.

This sequence belongs to the NnrD/CARKD family. Requires Mg(2+) as cofactor.

Its subcellular location is the cytoplasm. It carries out the reaction (6S)-NADHX + ATP = ADP + phosphate + NADH + H(+). It catalyses the reaction (6S)-NADPHX + ATP = ADP + phosphate + NADPH + H(+). Its function is as follows. Catalyzes the dehydration of the S-form of NAD(P)HX at the expense of ATP, which is converted to ADP. Together with NAD(P)HX epimerase, which catalyzes the epimerization of the S- and R-forms, the enzyme allows the repair of both epimers of NAD(P)HX, a damaged form of NAD(P)H that is a result of enzymatic or heat-dependent hydration. The protein is ATP-dependent (S)-NAD(P)H-hydrate dehydratase of Saccharomyces cerevisiae (strain ATCC 204508 / S288c) (Baker's yeast).